A 355-amino-acid polypeptide reads, in one-letter code: Holliday junction branch migration complex subunit RuvB (355 aa).

Positions 4 to 190 (TDKLAAERII…FGIVARLEFY (187 aa)) are large ATPase domain (RuvB-L). Residues L29, R30, G71, K74, T75, T76, 137-139 (EDY), R180, Y190, and R227 contribute to the ATP site. T75 provides a ligand contact to Mg(2+). The tract at residues 191 to 261 (DADQLSRIVQ…IADAALAMLD (71 aa)) is small ATPAse domain (RuvB-S). The interval 264–355 (PVGFDLMDRK…QSIWDTPDAQ (92 aa)) is head domain (RuvB-H). Residues R300, R319, and R324 each coordinate DNA.

This sequence belongs to the RuvB family. In terms of assembly, homohexamer. Forms an RuvA(8)-RuvB(12)-Holliday junction (HJ) complex. HJ DNA is sandwiched between 2 RuvA tetramers; dsDNA enters through RuvA and exits via RuvB. An RuvB hexamer assembles on each DNA strand where it exits the tetramer. Each RuvB hexamer is contacted by two RuvA subunits (via domain III) on 2 adjacent RuvB subunits; this complex drives branch migration. In the full resolvosome a probable DNA-RuvA(4)-RuvB(12)-RuvC(2) complex forms which resolves the HJ.

The protein resides in the cytoplasm. The catalysed reaction is ATP + H2O = ADP + phosphate + H(+). Functionally, the RuvA-RuvB-RuvC complex processes Holliday junction (HJ) DNA during genetic recombination and DNA repair, while the RuvA-RuvB complex plays an important role in the rescue of blocked DNA replication forks via replication fork reversal (RFR). RuvA specifically binds to HJ cruciform DNA, conferring on it an open structure. The RuvB hexamer acts as an ATP-dependent pump, pulling dsDNA into and through the RuvAB complex. RuvB forms 2 homohexamers on either side of HJ DNA bound by 1 or 2 RuvA tetramers; 4 subunits per hexamer contact DNA at a time. Coordinated motions by a converter formed by DNA-disengaged RuvB subunits stimulates ATP hydrolysis and nucleotide exchange. Immobilization of the converter enables RuvB to convert the ATP-contained energy into a lever motion, pulling 2 nucleotides of DNA out of the RuvA tetramer per ATP hydrolyzed, thus driving DNA branch migration. The RuvB motors rotate together with the DNA substrate, which together with the progressing nucleotide cycle form the mechanistic basis for DNA recombination by continuous HJ branch migration. Branch migration allows RuvC to scan DNA until it finds its consensus sequence, where it cleaves and resolves cruciform DNA. The polypeptide is Holliday junction branch migration complex subunit RuvB (Burkholderia multivorans (strain ATCC 17616 / 249)).